A 158-amino-acid polypeptide reads, in one-letter code: uncharacterized protein (158 aa).

This is an uncharacterized protein from Caenorhabditis elegans.